Here is a 256-residue protein sequence, read N- to C-terminus: Enolase-phosphatase E1 (256 aa).

Positions 14 and 16 each coordinate Mg(2+). Substrate-binding positions include 142-143 and K176; that span reads SS. D201 contributes to the Mg(2+) binding site.

This sequence belongs to the HAD-like hydrolase superfamily. MasA/MtnC family. Monomer. Mg(2+) is required as a cofactor.

Its subcellular location is the cytoplasm. The protein localises to the nucleus. It carries out the reaction 5-methylsulfanyl-2,3-dioxopentyl phosphate + H2O = 1,2-dihydroxy-5-(methylsulfanyl)pent-1-en-3-one + phosphate. It participates in amino-acid biosynthesis; L-methionine biosynthesis via salvage pathway; L-methionine from S-methyl-5-thio-alpha-D-ribose 1-phosphate: step 3/6. Its pathway is amino-acid biosynthesis; L-methionine biosynthesis via salvage pathway; L-methionine from S-methyl-5-thio-alpha-D-ribose 1-phosphate: step 4/6. Functionally, bifunctional enzyme that catalyzes the enolization of 2,3-diketo-5-methylthiopentyl-1-phosphate (DK-MTP-1-P) into the intermediate 2-hydroxy-3-keto-5-methylthiopentenyl-1-phosphate (HK-MTPenyl-1-P), which is then dephosphorylated to form the acireductone 1,2-dihydroxy-3-keto-5-methylthiopentene (DHK-MTPene). In Drosophila simulans (Fruit fly), this protein is Enolase-phosphatase E1.